Consider the following 384-residue polypeptide: tRNA-specific 2-thiouridylase MnmA (384 aa).

ATP contacts are provided by residues 9 to 16 (GMSGGVDS) and Met35. An interaction with target base in tRNA region spans residues 95–97 (NPD). Cys100 (nucleophile) is an active-site residue. An intrachain disulfide couples Cys100 to Cys196. Gly124 is a binding site for ATP. The interval 146–148 (KDQ) is interaction with tRNA. Cys196 acts as the Cysteine persulfide intermediate in catalysis. The segment at 308-309 (RY) is interaction with tRNA.

Belongs to the MnmA/TRMU family.

Its subcellular location is the cytoplasm. The catalysed reaction is S-sulfanyl-L-cysteinyl-[protein] + uridine(34) in tRNA + AH2 + ATP = 2-thiouridine(34) in tRNA + L-cysteinyl-[protein] + A + AMP + diphosphate + H(+). Functionally, catalyzes the 2-thiolation of uridine at the wobble position (U34) of tRNA, leading to the formation of s(2)U34. The chain is tRNA-specific 2-thiouridylase MnmA from Burkholderia ambifaria (strain ATCC BAA-244 / DSM 16087 / CCUG 44356 / LMG 19182 / AMMD) (Burkholderia cepacia (strain AMMD)).